The sequence spans 156 residues: EPIDERMAL PATTERNING FACTOR-like protein 6 (156 aa).

An N-terminal signal peptide occupies residues 1-47; it reads MGFERTSSSLSLLSSSLPSSLQPSENTRAKFSLFYLLLLFFVLCVIA. 3 disulfide bridges follow: Cys113/Cys147, Cys117/Cys123, and Cys120/Cys149.

Belongs to the plant cysteine rich small secretory peptide family. Epidermal patterning factor subfamily. In terms of assembly, interacts with ERECTA. In terms of tissue distribution, expressed in the internal layers of the root, hypocotyl and stems, and in the midrib of developing rosette leaves. Detected in a ring of cells surrounding the vascular elements. Expressed in developing stems soon after bolting, in inflorescence stems, near the root apex and in the chalazal region of ovules. Not found in cotyledons or in stomatal precursors or stomata.

It is found in the secreted. Functionally, acts primarily as positive regulator of inflorescence growth. Endodermal expression is sufficient for proper inflorescence architecture. Redundantly involved with EPFL4 in procambial development regulation. Also acts as tissue-specific regulator of epidermal pattern. Controls stomatal patterning by repressing stomatal production. TMM (AC Q9SSD1) functions to dampen or block CHAL signaling. Not processed by SDD1 (AC O64495). Acts as growth-regulatory ligand for ERECTA family receptors. The chain is EPIDERMAL PATTERNING FACTOR-like protein 6 from Arabidopsis thaliana (Mouse-ear cress).